The following is a 778-amino-acid chain: ATP synthase subunit beta (778 aa).

Residues 1–289 (MKENNKTIEA…IDIYEENEDL (289 aa)) are unknown. The ATP synthase subunit beta stretch occupies residues 290 to 778 (MKLNTLKSDK…KPLNSENKSN (489 aa)). Residue 447–454 (GGAGVGKT) participates in ATP binding.

Belongs to the ATPase alpha/beta chains family. As to quaternary structure, F-type ATPases have 2 components, CF(1) - the catalytic core - and CF(0) - the membrane proton channel. CF(1) has five subunits: alpha(3), beta(3), gamma(1), delta(1), epsilon(1). CF(0) has three main subunits: a(1), b(2) and c(9-12). The alpha and beta chains form an alternating ring which encloses part of the gamma chain. CF(1) is attached to CF(0) by a central stalk formed by the gamma and epsilon chains, while a peripheral stalk is formed by the delta and b chains.

Its subcellular location is the cell membrane. It catalyses the reaction ATP + H2O + 4 H(+)(in) = ADP + phosphate + 5 H(+)(out). Functionally, produces ATP from ADP in the presence of a proton gradient across the membrane. The catalytic sites are hosted primarily by the beta subunits. This chain is ATP synthase subunit beta (atpD), found in Malacoplasma penetrans (strain HF-2) (Mycoplasma penetrans).